We begin with the raw amino-acid sequence, 276 residues long: NH(3)-dependent NAD(+) synthetase (276 aa).

43–50 (GISGGVDS) serves as a coordination point for ATP. D49 provides a ligand contact to Mg(2+). Position 146 (R146) interacts with deamido-NAD(+). ATP is bound at residue T166. Position 171 (E171) interacts with Mg(2+). Deamido-NAD(+) contacts are provided by K179 and D186. Residues K195 and T217 each contribute to the ATP site. 266–267 (HK) lines the deamido-NAD(+) pocket.

This sequence belongs to the NAD synthetase family. Homodimer.

The enzyme catalyses deamido-NAD(+) + NH4(+) + ATP = AMP + diphosphate + NAD(+) + H(+). Its pathway is cofactor biosynthesis; NAD(+) biosynthesis; NAD(+) from deamido-NAD(+) (ammonia route): step 1/1. Its function is as follows. Catalyzes the ATP-dependent amidation of deamido-NAD to form NAD. Uses ammonia as a nitrogen source. This chain is NH(3)-dependent NAD(+) synthetase, found in Shewanella pealeana (strain ATCC 700345 / ANG-SQ1).